A 183-amino-acid polypeptide reads, in one-letter code: uncharacterized protein (183 aa).

The protein belongs to the asfivirus S183L family.

This is an uncharacterized protein from African swine fever virus (isolate Pig/Kenya/KEN-50/1950) (ASFV).